Consider the following 678-residue polypeptide: Portal protein (678 aa).

The segment at 376 to 405 is disordered; the sequence is PAVDHTLPGFGKGGTGRGSRPQDPGARPQQ. The segment at 422–443 is putative leucine zipper motif; it reads LEGYINNLFGTIERLRETNAGL. Positions 459–470 are enriched in basic and acidic residues; sequence AGALEREQRAAD. Disordered regions lie at residues 459–480 and 622–678; these read AGALEREQRAADRAAGGGAGRP and PRPP…HARR. Residues 642 to 652 show a composition bias toward basic residues; the sequence is SRSRTRTRSRS. Over residues 667–678 the composition is skewed to basic and acidic residues; sequence VERRDGRPHARR.

This sequence belongs to the herpesviridae portal protein family. In terms of assembly, homododecamerizes. Interacts with terminase subunits TRM1 and TRM3.

The protein localises to the virion. It localises to the host nucleus. Functionally, forms a portal in the viral capsid through which viral DNA is translocated during DNA packaging. Assembles as a dodecamer at a single fivefold axe of the T=16 icosahedric capsid. Binds to the molecular motor that translocates the viral DNA, termed terminase. This is Portal protein (UL6) from Homo sapiens (Human).